Consider the following 115-residue polypeptide: Iron-sulfur cluster insertion protein ErpA (115 aa).

Cys-43, Cys-107, and Cys-109 together coordinate iron-sulfur cluster.

This sequence belongs to the HesB/IscA family. As to quaternary structure, homodimer. Iron-sulfur cluster serves as cofactor.

Its function is as follows. Required for insertion of 4Fe-4S clusters for at least IspG. The sequence is that of Iron-sulfur cluster insertion protein ErpA from Photorhabdus laumondii subsp. laumondii (strain DSM 15139 / CIP 105565 / TT01) (Photorhabdus luminescens subsp. laumondii).